A 136-amino-acid chain; its full sequence is MERVERIIEFEIARINSHLPRARKSLKDLLNMEEPMITLRDGSVHYFKRQELELLASLLDEEEIAMLRLPMVLEISTVERDKIIIRGKVEAKVIRKILGFEEAIIEEPILKLPRYYLPKIRRILPTTTVHAFIVEW.

This sequence belongs to the UPF0216 family.

The polypeptide is UPF0216 protein PYRAB16100 (Pyrococcus abyssi (strain GE5 / Orsay)).